Reading from the N-terminus, the 232-residue chain is UPF0235 protein At5g63440 (232 aa).

This sequence belongs to the UPF0235 family. Interacts with CTN.

It localises to the nucleus speckle. May play a role during early embryonic development. Probably involved in pre-mRNA splicing. This Arabidopsis thaliana (Mouse-ear cress) protein is UPF0235 protein At5g63440.